Reading from the N-terminus, the 620-residue chain is Sterile alpha motif domain-containing protein 15 (620 aa).

A disordered region spans residues 1–394 (MSEVSGDYNS…PNYPAGKDKL (394 aa)). 3 stretches are compositionally biased toward basic and acidic residues: residues 62 to 83 (TRTRKGDLVPVGKNHEVPDLQR), 106 to 125 (IDPEQKTPDIRSEKLRKSVE), and 135 to 180 (TKSE…HFKS). Positions 181–191 (TEQSGTEQPEQ) are enriched in polar residues. Over residues 233-242 (RPLKASKKAQ) the composition is skewed to basic residues. The segment covering 261–270 (LLDDQEETQE) has biased composition (acidic residues). Composition is skewed to basic and acidic residues over residues 271–286 (ESIKEKVPEPLGDRKP), 295–315 (KSSERSKLKDTLIEPSKDKDP), 323–337 (FPKEKLIKTTEKTGD), and 347–382 (IQEKSQPEPTEKNLELPNKPKPEEERDLPKEDKPES). The SAM domain occupies 480–543 (WSPERVAEWI…SYHTRVLLGI (64 aa)). Residues 594-604 (EIKAEEKKEDA) show a composition bias toward basic and acidic residues. Residues 594 to 620 (EIKAEEKKEDALPENSLEENEELYEAT) are disordered. Acidic residues predominate over residues 609 to 620 (SLEENEELYEAT).

The sequence is that of Sterile alpha motif domain-containing protein 15 (Samd15) from Mus musculus (Mouse).